A 104-amino-acid chain; its full sequence is N(4)-acetylcytidine amidohydrolase (104 aa).

Positions I6 to Q94 constitute an ASCH domain. K21 acts as the Proton acceptor in catalysis. The active-site Nucleophile is T24. Residue E74 is the Proton donor of the active site.

The protein belongs to the N(4)-acetylcytidine amidohydrolase family.

It carries out the reaction N(4)-acetylcytidine + H2O = cytidine + acetate + H(+). The catalysed reaction is N(4)-acetyl-2'-deoxycytidine + H2O = 2'-deoxycytidine + acetate + H(+). It catalyses the reaction N(4)-acetylcytosine + H2O = cytosine + acetate + H(+). In terms of biological role, catalyzes the hydrolysis of N(4)-acetylcytidine (ac4C). This Salmonella agona (strain SL483) protein is N(4)-acetylcytidine amidohydrolase (yqfB).